The sequence spans 521 residues: Bacillolysin (521 aa).

An N-terminal signal peptide occupies residues 1 to 27; it reads MGLGKKLSVAVAASFMSLSISLPGVQA. Residues 28 to 221 constitute a propeptide, activation peptide; the sequence is AEGHQLKENQ…ILKQQNKVEH (194 aa). Asp-360 is a Ca(2+) binding site. His-364 contributes to the Zn(2+) binding site. Glu-365 is an active-site residue. Positions 368 and 388 each coordinate Zn(2+). Ca(2+) is bound by residues Asp-399, Asp-402, Asp-404, and Glu-407. His-449 functions as the Proton donor in the catalytic mechanism.

It belongs to the peptidase M4 family. Ca(2+) serves as cofactor. Zn(2+) is required as a cofactor.

It localises to the secreted. The enzyme catalyses Similar, but not identical, to that of thermolysin.. Extracellular zinc metalloprotease. This Bacillus subtilis subsp. amylosacchariticus protein is Bacillolysin (nprE).